The primary structure comprises 337 residues: Glycerol-3-phosphate dehydrogenase [NAD(P)+] (337 aa).

3 residues coordinate NADPH: Trp-11, Arg-30, and Lys-113. Sn-glycerol 3-phosphate is bound by residues Lys-113, Gly-141, and Ser-143. Ala-145 lines the NADPH pocket. Residues Lys-196, Asp-249, Ser-259, Arg-260, and Asn-261 each contribute to the sn-glycerol 3-phosphate site. Lys-196 serves as the catalytic Proton acceptor. Residue Arg-260 participates in NADPH binding. 2 residues coordinate NADPH: Val-284 and Glu-286.

It belongs to the NAD-dependent glycerol-3-phosphate dehydrogenase family.

It is found in the cytoplasm. The enzyme catalyses sn-glycerol 3-phosphate + NAD(+) = dihydroxyacetone phosphate + NADH + H(+). It catalyses the reaction sn-glycerol 3-phosphate + NADP(+) = dihydroxyacetone phosphate + NADPH + H(+). It functions in the pathway membrane lipid metabolism; glycerophospholipid metabolism. Catalyzes the reduction of the glycolytic intermediate dihydroxyacetone phosphate (DHAP) to sn-glycerol 3-phosphate (G3P), the key precursor for phospholipid synthesis. The chain is Glycerol-3-phosphate dehydrogenase [NAD(P)+] from Leptothrix cholodnii (strain ATCC 51168 / LMG 8142 / SP-6) (Leptothrix discophora (strain SP-6)).